Reading from the N-terminus, the 253-residue chain is Zwei Ig domain protein zig-4 (253 aa).

The first 16 residues, 1 to 16 (MFAIALLSFLVVLINA), serve as a signal peptide directing secretion. 2 consecutive Ig-like C2-type domains span residues 43–146 (PAKI…AEVE) and 162–245 (PEIV…TFLY). 2 cysteine pairs are disulfide-bonded: Cys67–Cys130 and Cys183–Cys229.

As to expression, expressed in PVT, ASK, BAG, M2 and ASI neurons. In L1 larvae, expressed in pharyngeal ectoderm and mesoderm.

It is found in the secreted. Required for maintaining axon position of PVQ and PVP neurons postembryonically in the ventral nerve cord (VNC) by preventing axons drifting into the opposite side of the VNC that could occur during body growth and movement. In Caenorhabditis elegans, this protein is Zwei Ig domain protein zig-4.